The sequence spans 956 residues: Isoleucine--tRNA ligase (956 aa).

The 'HIGH' region signature appears at 60-70 (PYANGHIHVGH). L-isoleucyl-5'-AMP is bound at residue Glu-583. A 'KMSKS' region motif is present at residues 624–628 (KMSKS). Residue Lys-627 participates in ATP binding. The Zn(2+) site is built by Cys-921, Cys-924, Cys-938, and Cys-941.

Belongs to the class-I aminoacyl-tRNA synthetase family. IleS type 1 subfamily. As to quaternary structure, monomer. The cofactor is Zn(2+).

Its subcellular location is the cytoplasm. The enzyme catalyses tRNA(Ile) + L-isoleucine + ATP = L-isoleucyl-tRNA(Ile) + AMP + diphosphate. Functionally, catalyzes the attachment of isoleucine to tRNA(Ile). As IleRS can inadvertently accommodate and process structurally similar amino acids such as valine, to avoid such errors it has two additional distinct tRNA(Ile)-dependent editing activities. One activity is designated as 'pretransfer' editing and involves the hydrolysis of activated Val-AMP. The other activity is designated 'posttransfer' editing and involves deacylation of mischarged Val-tRNA(Ile). In Aquifex aeolicus (strain VF5), this protein is Isoleucine--tRNA ligase.